A 313-amino-acid polypeptide reads, in one-letter code: Myeloma-overexpressed gene protein (313 aa).

Residues 107-129 form a disordered region; it reads ERNKGDKGAQTGAGLSQEAEDVD.

The chain is Myeloma-overexpressed gene protein (MYEOV) from Homo sapiens (Human).